The following is a 375-amino-acid chain: Cobalt-precorrin-5B C(1)-methyltransferase (375 aa).

It belongs to the CbiD family.

The catalysed reaction is Co-precorrin-5B + S-adenosyl-L-methionine = Co-precorrin-6A + S-adenosyl-L-homocysteine. It functions in the pathway cofactor biosynthesis; adenosylcobalamin biosynthesis; cob(II)yrinate a,c-diamide from sirohydrochlorin (anaerobic route): step 6/10. Its function is as follows. Catalyzes the methylation of C-1 in cobalt-precorrin-5B to form cobalt-precorrin-6A. This Paracidovorax citrulli (strain AAC00-1) (Acidovorax citrulli) protein is Cobalt-precorrin-5B C(1)-methyltransferase.